A 110-amino-acid chain; its full sequence is Ribonuclease P protein component (110 aa).

This sequence belongs to the RnpA family. In terms of assembly, consists of a catalytic RNA component (M1 or rnpB) and a protein subunit.

The catalysed reaction is Endonucleolytic cleavage of RNA, removing 5'-extranucleotides from tRNA precursor.. Functionally, RNaseP catalyzes the removal of the 5'-leader sequence from pre-tRNA to produce the mature 5'-terminus. It can also cleave other RNA substrates such as 4.5S RNA. The protein component plays an auxiliary but essential role in vivo by binding to the 5'-leader sequence and broadening the substrate specificity of the ribozyme. This is Ribonuclease P protein component from Mesorhizobium japonicum (strain LMG 29417 / CECT 9101 / MAFF 303099) (Mesorhizobium loti (strain MAFF 303099)).